A 436-amino-acid chain; its full sequence is Trigger factor (436 aa).

A PPIase FKBP-type domain is found at 163–248 (GDRVTVDFEG…VKKIEAANLP (86 aa)).

It belongs to the FKBP-type PPIase family. Tig subfamily.

Its subcellular location is the cytoplasm. It catalyses the reaction [protein]-peptidylproline (omega=180) = [protein]-peptidylproline (omega=0). Its function is as follows. Involved in protein export. Acts as a chaperone by maintaining the newly synthesized protein in an open conformation. Functions as a peptidyl-prolyl cis-trans isomerase. The protein is Trigger factor of Delftia acidovorans (strain DSM 14801 / SPH-1).